A 61-amino-acid chain; its full sequence is Small ribosomal subunit protein uS14 (61 aa).

C24, C27, C40, and C43 together coordinate Zn(2+).

This sequence belongs to the universal ribosomal protein uS14 family. Zinc-binding uS14 subfamily. Part of the 30S ribosomal subunit. Contacts proteins S3 and S10. The cofactor is Zn(2+).

In terms of biological role, binds 16S rRNA, required for the assembly of 30S particles and may also be responsible for determining the conformation of the 16S rRNA at the A site. In Chloroflexus aurantiacus (strain ATCC 29364 / DSM 637 / Y-400-fl), this protein is Small ribosomal subunit protein uS14.